A 141-amino-acid polypeptide reads, in one-letter code: uncharacterized protein (141 aa).

2 helical membrane passes run 20–42 (FLVN…FCLA) and 52–74 (LHLC…IFTL).

The protein resides in the cell membrane. This is an uncharacterized protein from Archaeoglobus fulgidus (strain ATCC 49558 / DSM 4304 / JCM 9628 / NBRC 100126 / VC-16).